We begin with the raw amino-acid sequence, 4467 residues long: Protocadherin-like protein (4467 aa).

An N-terminal signal peptide occupies residues 1–22 (MRGINAIVGFLLCFCLLHRINT). 28 consecutive Cadherin domains span residues 23–128 (AVQF…SPTF), 129–238 (PQHL…SPVF), 239–350 (EKKS…VPVF), 351–455 (QEES…TPVF), 459–566 (NPQQ…NPDF), 567–664 (SKVV…PPTF), 665–764 (KNAP…PPTF), 765–884 (SRSS…SPEF), 885–994 (SQTS…PPLF), 1092–1197 (EAQP…QPRF), 1290–1395 (SRTV…SPKF), 1396–1499 (SADS…PPKF), 1495–1597 (GPPK…EPQF), 1601–1701 (SNGF…QPVR), 1793–1891 (TMID…KPQF), 1892–1992 (SESA…YPKF), 1993–2100 (EPNL…KPQF), 2101–2202 (LESD…RPVF), 2203–2312 (TDCP…FPFF), 2313–2423 (LTRT…PPAF), 2425–2529 (PSAV…TPTF), 2530–2639 (KLEE…PPIF), 2640–2746 (PKPS…IPKF), 2747–2849 (DNLI…SPYF), 2850–2954 (PNPP…APVF), 2955–3062 (NPRE…PPVF), 3063–3170 (VPAE…GPWF), and 3173–3288 (RYYE…EPFD). The Extracellular segment spans residues 23–4258 (AVQFKQEILE…RPSSRWANPA (4236 aa)). The EGF-like 1 domain occupies 3551-3589 (PDINCTTGTPCLHGGTCHNAVPKGIICECGRDYLGPECQ). 7 disulfides stabilise this stretch: Cys3555–Cys3567, Cys3561–Cys3577, Cys3579–Cys3588, Cys3762–Cys3788, Cys3794–Cys3803, Cys3797–Cys3812, and Cys3814–Cys3823. A Laminin G-like 1 domain is found at 3590–3788 (STTRTFRGNS…LKEVNTELGC (199 aa)). Residues 3790 to 3824 (LNNQCPNCNGRGYCEPFWNYAICVCDLGFGGANCD) form the EGF-like 2 domain. Residues 3842–4096 (VKQVKRKRRE…KVIISSSGGS (255 aa)) enclose the Laminin G-like 2 domain. Positions 4089 to 4118 (IISSSGGSVSGGSGGASGGSGGASGSGGSV) are disordered. Over residues 4096–4118 (SVSGGSGGASGGSGGASGSGGSV) the composition is skewed to gly residues. The EGF-like 3 domain maps to 4206-4238 (PCGSNFCRHGGTCVSADPPYCLCPVGWSGPVCE). 3 disulfides stabilise this stretch: Cys4207/Cys4218, Cys4212/Cys4226, and Cys4228/Cys4237. A helical membrane pass occupies residues 4259 to 4279 (VIACILVILLAILVIIGAVLL). At 4280-4467 (KRRPQPAVVA…NLNRIFNEDE (188 aa)) the chain is on the cytoplasmic side. The disordered stretch occupies residues 4424–4445 (DVDDLSELGDSDEEPDEEEEQE).

As to expression, component of the acid-insoluble organic matrix of the aragonitic skeleton (at protein level).

It is found in the membrane. In Acropora millepora (Staghorn coral), this protein is Protocadherin-like protein.